The following is a 178-amino-acid chain: Large ribosomal subunit protein uL6 (178 aa).

It belongs to the universal ribosomal protein uL6 family. Part of the 50S ribosomal subunit.

Its function is as follows. This protein binds to the 23S rRNA, and is important in its secondary structure. It is located near the subunit interface in the base of the L7/L12 stalk, and near the tRNA binding site of the peptidyltransferase center. This chain is Large ribosomal subunit protein uL6, found in Opitutus terrae (strain DSM 11246 / JCM 15787 / PB90-1).